A 226-amino-acid chain; its full sequence is Cytidylate kinase (226 aa).

Residue 10-18 coordinates ATP; it reads GPASSGKST.

The protein belongs to the cytidylate kinase family. Type 1 subfamily.

The protein resides in the cytoplasm. It carries out the reaction CMP + ATP = CDP + ADP. It catalyses the reaction dCMP + ATP = dCDP + ADP. This chain is Cytidylate kinase, found in Streptococcus equi subsp. equi (strain 4047).